The primary structure comprises 334 residues: MNEDPKVNLSGLPRDCIDAGAPENISAAVPSQGSVAESEPELVVNPWDIVLCSSGTLICCENAVVVLIIFHSPSLRAPMFLLIGSLALADLLAGLGLIINFVFAYLLQSEATKLVTIGLIVASFSASVCSLLAITVDRYLSLYYALTYHSERTVTFTYVMLVMLWGTSICLGLLPVMGWNCLRDESTCSVVRPLTKNNAAILSISFLFMFALMLQLYIQICKIVMRHAHQIALQHHFLATSHYVTTRKGVSTLALILGTFAACWMPFTLYSLIADYTYPSIYTYATLLPATYNSIINPVIYAFRNQEIQKALCLICCGCIPSSLSQRARSPSDV.

At 1–48 the chain is on the extracellular side; it reads MNEDPKVNLSGLPRDCIDAGAPENISAAVPSQGSVAESEPELVVNPWD. Asparagine 8 and asparagine 24 each carry an N-linked (GlcNAc...) asparagine glycan. The chain crosses the membrane as a helical span at residues 49-69; sequence IVLCSSGTLICCENAVVVLII. Residues 70–78 lie on the Cytoplasmic side of the membrane; the sequence is FHSPSLRAP. Residues 79-99 form a helical membrane-spanning segment; that stretch reads MFLLIGSLALADLLAGLGLII. Topologically, residues 100–113 are extracellular; that stretch reads NFVFAYLLQSEATK. A helical transmembrane segment spans residues 114 to 134; sequence LVTIGLIVASFSASVCSLLAI. Topologically, residues 135-158 are cytoplasmic; the sequence is TVDRYLSLYYALTYHSERTVTFTY. The helical transmembrane segment at 159–179 threads the bilayer; it reads VMLVMLWGTSICLGLLPVMGW. At 180 to 199 the chain is on the extracellular side; the sequence is NCLRDESTCSVVRPLTKNNA. Residues 200-220 traverse the membrane as a helical segment; it reads AILSISFLFMFALMLQLYIQI. The Cytoplasmic portion of the chain corresponds to 221–252; that stretch reads CKIVMRHAHQIALQHHFLATSHYVTTRKGVST. The chain crosses the membrane as a helical span at residues 253 to 273; that stretch reads LALILGTFAACWMPFTLYSLI. Residues 274–282 are Extracellular-facing; sequence ADYTYPSIY. Residues 283-303 traverse the membrane as a helical segment; it reads TYATLLPATYNSIINPVIYAF. Topologically, residues 304–334 are cytoplasmic; the sequence is RNQEIQKALCLICCGCIPSSLSQRARSPSDV. Cysteine 317 carries S-palmitoyl cysteine lipidation. Residues serine 330 and serine 332 each carry the phosphoserine modification.

The protein belongs to the G-protein coupled receptor 1 family. In terms of tissue distribution, expressed predominantly in the forebrain and a lesser extent in the hindbrain. Lower expression in the liver.

The protein localises to the cell membrane. In terms of biological role, receptor with constitutive G(s) signaling activity that stimulates cyclic AMP production. Promotes neurite outgrowth and blocks myelin inhibition in neurons. In Mus musculus (Mouse), this protein is G-protein coupled receptor 12 (Gpr12).